The primary structure comprises 292 residues: Glycine--tRNA ligase alpha subunit (292 aa).

The protein belongs to the class-II aminoacyl-tRNA synthetase family. In terms of assembly, tetramer of two alpha and two beta subunits.

The protein resides in the cytoplasm. The catalysed reaction is tRNA(Gly) + glycine + ATP = glycyl-tRNA(Gly) + AMP + diphosphate. In Buchnera aphidicola subsp. Schizaphis graminum (strain Sg), this protein is Glycine--tRNA ligase alpha subunit.